A 164-amino-acid chain; its full sequence is UPF0262 protein Saro_0143 (164 aa).

The protein belongs to the UPF0262 family.

This Novosphingobium aromaticivorans (strain ATCC 700278 / DSM 12444 / CCUG 56034 / CIP 105152 / NBRC 16084 / F199) protein is UPF0262 protein Saro_0143.